Reading from the N-terminus, the 501-residue chain is Phenylalanine--tRNA ligase alpha subunit (501 aa).

Residues threonine 344, 383–385, and phenylalanine 424 each bind L-phenylalanine; that span reads QID. Glutamate 426 contributes to the Mg(2+) binding site. Phenylalanine 449 contacts L-phenylalanine.

Belongs to the class-II aminoacyl-tRNA synthetase family. Phe-tRNA synthetase alpha subunit type 2 subfamily. In terms of assembly, tetramer of two alpha and two beta subunits. Requires Mg(2+) as cofactor.

The protein localises to the cytoplasm. It carries out the reaction tRNA(Phe) + L-phenylalanine + ATP = L-phenylalanyl-tRNA(Phe) + AMP + diphosphate + H(+). This is Phenylalanine--tRNA ligase alpha subunit from Thermococcus kodakarensis (strain ATCC BAA-918 / JCM 12380 / KOD1) (Pyrococcus kodakaraensis (strain KOD1)).